Here is a 395-residue protein sequence, read N- to C-terminus: Calsequestrin-1 (395 aa).

Positions 1 to 28 are cleaved as a signal peptide; the sequence is MNAADRMGARVALLLLLVLGSPQSGVHG. Tyrosine 37 carries the phosphotyrosine modification. Serine 75 is subject to Phosphoserine. Threonine 118 bears the Phosphothreonine mark. Serine 210 carries the post-translational modification Phosphoserine. Asparagine 344 carries an N-linked (GlcNAc...) asparagine glycan. Residues 376–395 form a disordered region; sequence EGEINTEDDDDEDDDDDDDD.

It belongs to the calsequestrin family. As to quaternary structure, monomer; increases in response to a depletion of intracellular calcium. Homodimer. Homotetramer and homopolymer. Can form linear homooligomers. Ca(2+) ions promote oligomerization. Interacts (via C-terminal end and preferentially with the monomeric form) with STIM1; this interaction increases in response to a depletion of intracellular calcium, decreases both STIM1 aggregation and clustering, interaction of STIM1 with ORAI1 and store-operated Ca(2+) entry (SOCE) activity. Interacts with ASPH and TRDN. N-glycosylated. As to expression, detected in skeletal muscle (at protein level). Detected in skeletal muscle.

It localises to the endoplasmic reticulum. Its subcellular location is the sarcoplasmic reticulum. It is found in the sarcoplasmic reticulum lumen. The protein localises to the mitochondrion matrix. The protein resides in the sarcoplasmic reticulum membrane. Calsequestrin is a high-capacity, moderate affinity, calcium-binding protein and thus acts as an internal calcium store in muscle. Calcium ions are bound by clusters of acidic residues at the protein surface, often at the interface between subunits. Can bind around 80 Ca(2+) ions. Regulates the release of lumenal Ca(2+) via the calcium release channel RYR1; this plays an important role in triggering muscle contraction. Negatively regulates store-operated Ca(2+) entry (SOCE) activity. The sequence is that of Calsequestrin-1 (CASQ1) from Oryctolagus cuniculus (Rabbit).